We begin with the raw amino-acid sequence, 427 residues long: Flotillin-1 (427 aa).

Phosphoserine is present on residues Ser-19, Ser-163, and Ser-385. Phosphothreonine is present on Thr-387.

Belongs to the band 7/mec-2 family. Flotillin subfamily. As to quaternary structure, heterooligomeric complex of flotillin-1 and flotillin-2 and caveolin-1 and caveolin-2. Interacts with ECPAS.

The protein resides in the cell membrane. It is found in the endosome. The protein localises to the membrane. It localises to the caveola. Its subcellular location is the melanosome. The protein resides in the membrane raft. Its function is as follows. May act as a scaffolding protein within caveolar membranes, functionally participating in formation of caveolae or caveolae-like vesicles. In Sus scrofa (Pig), this protein is Flotillin-1 (FLOT1).